The chain runs to 425 residues: Serine--tRNA ligase (425 aa).

233-235 contacts L-serine; it reads TAE. 264 to 266 lines the ATP pocket; the sequence is RRE. E287 contributes to the L-serine binding site. 351-354 is a binding site for ATP; that stretch reads EISS. S385 lines the L-serine pocket.

The protein belongs to the class-II aminoacyl-tRNA synthetase family. Type-1 seryl-tRNA synthetase subfamily. As to quaternary structure, homodimer. The tRNA molecule binds across the dimer.

Its subcellular location is the cytoplasm. It carries out the reaction tRNA(Ser) + L-serine + ATP = L-seryl-tRNA(Ser) + AMP + diphosphate + H(+). The enzyme catalyses tRNA(Sec) + L-serine + ATP = L-seryl-tRNA(Sec) + AMP + diphosphate + H(+). Its pathway is aminoacyl-tRNA biosynthesis; selenocysteinyl-tRNA(Sec) biosynthesis; L-seryl-tRNA(Sec) from L-serine and tRNA(Sec): step 1/1. Catalyzes the attachment of serine to tRNA(Ser). Is also able to aminoacylate tRNA(Sec) with serine, to form the misacylated tRNA L-seryl-tRNA(Sec), which will be further converted into selenocysteinyl-tRNA(Sec). This chain is Serine--tRNA ligase, found in Prochlorococcus marinus (strain AS9601).